A 66-amino-acid polypeptide reads, in one-letter code: Beta-toxin Css6 (66 aa).

An LCN-type CS-alpha/beta domain is found at 1–66 (KEGYLVNSYT…VWPLPNKTCN (66 aa)). Disulfide bonds link Cys-12–Cys-65, Cys-16–Cys-41, Cys-25–Cys-46, and Cys-29–Cys-48. Position 66 is an asparagine amide (Asn-66).

It belongs to the long (4 C-C) scorpion toxin superfamily. Sodium channel inhibitor family. Beta subfamily. Expressed by the venom gland.

Its subcellular location is the secreted. Its function is as follows. Beta toxins bind voltage-independently at site-4 of sodium channels (Nav) and shift the voltage of activation toward more negative potentials thereby affecting sodium channel activation and promoting spontaneous and repetitive firing. The chain is Beta-toxin Css6 from Centruroides suffusus (Durango bark scorpion).